The primary structure comprises 336 residues: Ferrochelatase (336 aa).

Positions 206 and 287 each coordinate Fe cation.

It belongs to the ferrochelatase family.

The protein resides in the cytoplasm. The catalysed reaction is heme b + 2 H(+) = protoporphyrin IX + Fe(2+). It functions in the pathway porphyrin-containing compound metabolism; protoheme biosynthesis; protoheme from protoporphyrin-IX: step 1/1. Catalyzes the ferrous insertion into protoporphyrin IX. The chain is Ferrochelatase from Neisseria gonorrhoeae (strain ATCC 700825 / FA 1090).